Reading from the N-terminus, the 545-residue chain is Chaperonin GroEL (545 aa).

Residues 30-33 (TLGP), Lys-51, 87-91 (DGTTT), Gly-415, and Asp-495 each bind ATP.

This sequence belongs to the chaperonin (HSP60) family. In terms of assembly, forms a cylinder of 14 subunits composed of two heptameric rings stacked back-to-back. Interacts with the co-chaperonin GroES.

Its subcellular location is the cytoplasm. The enzyme catalyses ATP + H2O + a folded polypeptide = ADP + phosphate + an unfolded polypeptide.. Functionally, together with its co-chaperonin GroES, plays an essential role in assisting protein folding. The GroEL-GroES system forms a nano-cage that allows encapsulation of the non-native substrate proteins and provides a physical environment optimized to promote and accelerate protein folding. The protein is Chaperonin GroEL of Shewanella amazonensis (strain ATCC BAA-1098 / SB2B).